Consider the following 709-residue polypeptide: Polyribonucleotide nucleotidyltransferase (709 aa).

Positions 482 and 488 each coordinate Mg(2+). A KH domain is found at 549–608 (PRIITMSIDPDKIREVIGPGGKVINKIIAETGVKIDIEDDGRIFIAATDTEAANKAVRII). Residues 618-686 (GKVYTGKVTR…KQGRINLSRK (69 aa)) form the S1 motif domain.

The protein belongs to the polyribonucleotide nucleotidyltransferase family. The cofactor is Mg(2+).

Its subcellular location is the cytoplasm. It catalyses the reaction RNA(n+1) + phosphate = RNA(n) + a ribonucleoside 5'-diphosphate. Involved in mRNA degradation. Catalyzes the phosphorolysis of single-stranded polyribonucleotides processively in the 3'- to 5'-direction. In Heliobacterium modesticaldum (strain ATCC 51547 / Ice1), this protein is Polyribonucleotide nucleotidyltransferase.